Reading from the N-terminus, the 130-residue chain is Small ribosomal subunit protein uS9 (130 aa).

Residues 98 to 130 (LKKAGMLTRDPRMKERKKYGLKKARKASQFSKR) form a disordered region. Residues 111 to 130 (KERKKYGLKKARKASQFSKR) are compositionally biased toward basic residues.

It belongs to the universal ribosomal protein uS9 family.

The polypeptide is Small ribosomal subunit protein uS9 (Lacticaseibacillus casei (strain BL23) (Lactobacillus casei)).